The sequence spans 341 residues: 4-hydroxy-2-oxovalerate aldolase (341 aa).

Positions 9-259 constitute a Pyruvate carboxyltransferase domain; sequence VRITEVCLRD…KLDIDLYKMM (251 aa). Substrate is bound at residue 17-18; sequence RD. A Mn(2+)-binding site is contributed by aspartate 18. Histidine 21 (proton acceptor) is an active-site residue. Substrate contacts are provided by serine 171 and histidine 198. Residues histidine 198 and histidine 200 each coordinate Mn(2+). Tyrosine 289 serves as a coordination point for substrate.

The protein belongs to the 4-hydroxy-2-oxovalerate aldolase family.

It carries out the reaction (S)-4-hydroxy-2-oxopentanoate = acetaldehyde + pyruvate. This chain is 4-hydroxy-2-oxovalerate aldolase, found in Bacillus cereus (strain ATCC 10987 / NRS 248).